The following is a 449-amino-acid chain: Exodeoxyribonuclease 7 large subunit (449 aa).

The protein belongs to the XseA family. Heterooligomer composed of large and small subunits.

It is found in the cytoplasm. It carries out the reaction Exonucleolytic cleavage in either 5'- to 3'- or 3'- to 5'-direction to yield nucleoside 5'-phosphates.. Its function is as follows. Bidirectionally degrades single-stranded DNA into large acid-insoluble oligonucleotides, which are then degraded further into small acid-soluble oligonucleotides. This chain is Exodeoxyribonuclease 7 large subunit, found in Salmonella typhimurium (strain LT2 / SGSC1412 / ATCC 700720).